The chain runs to 30 residues: Cycloviolacin-O20 (30 aa).

The cyclopeptide (Gly-Asp) cross-link spans 1 to 30; the sequence is GIPCGESCVWIPCLTSAIGCSCKSKVCYRD. 3 disulfides stabilise this stretch: Cys-4/Cys-20, Cys-8/Cys-22, and Cys-13/Cys-27.

This is a cyclic peptide.

Functionally, probably participates in a plant defense mechanism. In Viola odorata (Sweet violet), this protein is Cycloviolacin-O20.